The chain runs to 244 residues: Putative outer membrane protein RC0105 (244 aa).

A signal peptide spans 1 to 23; it reads MLRIVKKLGIILFVSTISINSFA.

Belongs to the OmpW/AlkL family.

Its subcellular location is the cell outer membrane. The sequence is that of Putative outer membrane protein RC0105 from Rickettsia conorii (strain ATCC VR-613 / Malish 7).